Here is a 605-residue protein sequence, read N- to C-terminus: Tegument protein UL47 homolog (605 aa).

A disordered region spans residues 1 to 75; that stretch reads MATDNARPRS…DPWKLEPAND (75 aa). Basic residues predominate over residues 8–17; that stretch reads PRSRSLRRKS. Positions 54-69 are enriched in basic and acidic residues; the sequence is GADRDPGTRRGIDPWK.

The protein belongs to the alphaherpesvirinae HHV-1 UL47 family. In terms of assembly, interacts with US3 kinase. Interacts with UL31 and UL34; these interactions seem important for efficient virion nuclear egress. Interacts with UL41/VHS. Phosphorylated by US3. This phosphorylation is required for proper nuclear localization.

Its subcellular location is the virion tegument. The protein resides in the host nucleus. The protein localises to the host cytoplasm. Tegument protein that can bind to various RNA transcripts. Plays a role in the attenuation of selective viral and cellular mRNA degradation by modulating the activity of host shutoff RNase UL41/VHS. Also plays a role in the primary envelopment of virions in the perinuclear space, probably by interacting with two nuclear egress proteins UL31 and UL34. The chain is Tegument protein UL47 homolog (sORF1) from Amazona oratrix (yellow-headed parrot).